Here is a 61-residue protein sequence, read N- to C-terminus: Alpha-conotoxin-like Sm1.1 (61 aa).

The first 16 residues, 1 to 16 (MFTVFLLVVLATTVVS), serve as a signal peptide directing secretion. Positions 17–43 (FPSDRASDGRDDEAKDERSDMHESGRK) are excised as a propeptide. The disordered stretch occupies residues 19-46 (SDRASDGRDDEAKDERSDMHESGRKGRG). Basic and acidic residues predominate over residues 21 to 42 (RASDGRDDEAKDERSDMHESGR). 2 cysteine pairs are disulfide-bonded: Cys-48-Cys-53 and Cys-49-Cys-59. A 4-hydroxyproline; partial modification is found at Pro-55. Cys-59 bears the Cysteine amide mark.

The protein belongs to the conotoxin A superfamily. As to expression, expressed by the venom duct.

The protein localises to the secreted. In terms of biological role, alpha-conotoxins act on postsynaptic membranes, they bind to the nicotinic acetylcholine receptors (nAChR) and thus inhibit them. This chain is Alpha-conotoxin-like Sm1.1, found in Conus stercusmuscarum (Fly-specked cone).